The sequence spans 610 residues: E-selectin (610 aa).

The signal sequence occupies residues 1 to 21 (MIASQFLSALTLVLLIKESGA). The C-type lectin domain occupies 22-139 (WSYNTSTEAM…CSKKKLALCY (118 aa)). The Extracellular segment spans residues 22-556 (WSYNTSTEAM…CEAPTESNIP (535 aa)). The N-linked (GlcNAc...) asparagine glycan is linked to Asn-25. 5 disulfides stabilise this stretch: Cys-40-Cys-138, Cys-111-Cys-130, Cys-143-Cys-154, Cys-148-Cys-163, and Cys-165-Cys-174. Ca(2+)-binding residues include Glu-101, Asn-103, and Glu-109. A carbohydrate-binding positions include 101-109 (EPNNRQKDE), 113-118 (EIYIKR), and 126-128 (NDE). Asn-126 and Asp-127 together coordinate Ca(2+). An EGF-like domain is found at 140-175 (TAACTNTSCSGHGECVETINNYTCKCDPGFSGLKCE). Residues Asn-145 and Asn-160 are each glycosylated (N-linked (GlcNAc...) asparagine). Sushi domains are found at residues 178–239 (VNCT…ACNV), 240–301 (VECD…TCKA), 303–364 (TCRA…VCEA), 366–427 (QCTA…TCEA), 429–490 (RCDA…SCQV), and 491–549 (VKCS…TCEA). 3 N-linked (GlcNAc...) asparagine glycosylation sites follow: Asn-179, Asn-199, and Asn-203. Disulfide bonds link Cys-180–Cys-224, Cys-193–Cys-206, Cys-210–Cys-237, Cys-242–Cys-286, Cys-255–Cys-268, Cys-272–Cys-299, Cys-304–Cys-349, Cys-335–Cys-362, Cys-367–Cys-412, Cys-398–Cys-425, Cys-430–Cys-475, Cys-461–Cys-488, Cys-493–Cys-534, and Cys-520–Cys-547. Asn-265 is a glycosylation site (N-linked (GlcNAc...) asparagine). 2 N-linked (GlcNAc...) asparagine glycosylation sites follow: Asn-312 and Asn-332. N-linked (GlcNAc...) asparagine glycosylation is found at Asn-503 and Asn-527. The helical transmembrane segment at 557–578 (LVAGLSAAGLSLLTLAPFLLWL) threads the bilayer. Over 579 to 610 (RKCLRKAKKFVPASSCQSLESDGSYQKPSYIL) the chain is Cytoplasmic.

The protein belongs to the selectin/LECAM family. Interacts with SELPLG/PSGL1 and PODXL2 through the sialyl Lewis X epitope. SELPLG sulfation appears not to be required for this interaction.

It is found in the cell membrane. Functionally, cell-surface glycoprotein having a role in immunoadhesion. Mediates in the adhesion of blood neutrophils in cytokine-activated endothelium through interaction with SELPLG/PSGL1. May have a role in capillary morphogenesis. This is E-selectin (SELE) from Homo sapiens (Human).